Reading from the N-terminus, the 125-residue chain is Large ribosomal subunit protein bL12 (125 aa).

It belongs to the bacterial ribosomal protein bL12 family. In terms of assembly, homodimer. Part of the ribosomal stalk of the 50S ribosomal subunit. Forms a multimeric L10(L12)X complex, where L10 forms an elongated spine to which 2 to 4 L12 dimers bind in a sequential fashion. Binds GTP-bound translation factors.

Forms part of the ribosomal stalk which helps the ribosome interact with GTP-bound translation factors. Is thus essential for accurate translation. This chain is Large ribosomal subunit protein bL12, found in Francisella tularensis subsp. novicida (strain U112).